A 391-amino-acid polypeptide reads, in one-letter code: MSPTLLLTEQLIAHPSVTPDDAGCLDLLARRLAPLGFACERLDSGPENFRVSNLWSKRTAARSGQAQAATKTVVFAGHTDVVPTGPVEQWSSPPFTPTHRDGRLYGRGASDMKASIAAFVVAVEEFLAATPDPRLDIALLLTSDEEGPSVDGTKVVIEQLRARGERLDWCIVGEPTSVEQTGDMIKNGRRGTLSGRLTVRGVQGHIAYPQLARNPIHQAVPALTELAATVWDEGNAFFPPTSWQMSNIHGGTGATNVIPGQVVIDFNFRFSTESTAEGLQQRVHAVLDRHGLEYDLTWTLGGQPFLTTPGELVQAVQQAIRAETGLETELSTTGGTSDGRFIAQICPQVIELGPPNASIHKIDENVRLVDIEPLKNIYRRTLDHLNALAGA.

Histidine 78 contributes to the Zn(2+) binding site. Aspartate 80 is an active-site residue. Aspartate 111 provides a ligand contact to Zn(2+). Catalysis depends on glutamate 145, which acts as the Proton acceptor. Positions 146, 174, and 360 each coordinate Zn(2+).

Belongs to the peptidase M20A family. DapE subfamily. As to quaternary structure, homodimer. It depends on Zn(2+) as a cofactor. Requires Co(2+) as cofactor.

It catalyses the reaction N-succinyl-(2S,6S)-2,6-diaminopimelate + H2O = (2S,6S)-2,6-diaminopimelate + succinate. Its pathway is amino-acid biosynthesis; L-lysine biosynthesis via DAP pathway; LL-2,6-diaminopimelate from (S)-tetrahydrodipicolinate (succinylase route): step 3/3. Its function is as follows. Catalyzes the hydrolysis of N-succinyl-L,L-diaminopimelic acid (SDAP), forming succinate and LL-2,6-diaminopimelate (DAP), an intermediate involved in the bacterial biosynthesis of lysine and meso-diaminopimelic acid, an essential component of bacterial cell walls. This is Succinyl-diaminopimelate desuccinylase from Acidovorax ebreus (strain TPSY) (Diaphorobacter sp. (strain TPSY)).